Reading from the N-terminus, the 89-residue chain is MAISQERKNELIKEYRTHEADTGSPEVQIAVLTAEITALNEHLREHKKDHHSRRGLLKMVGRRRHLLNYLRDKDVQRYRELIKSLGIRR.

It belongs to the universal ribosomal protein uS15 family. Part of the 30S ribosomal subunit. Forms a bridge to the 50S subunit in the 70S ribosome, contacting the 23S rRNA.

Its function is as follows. One of the primary rRNA binding proteins, it binds directly to 16S rRNA where it helps nucleate assembly of the platform of the 30S subunit by binding and bridging several RNA helices of the 16S rRNA. Functionally, forms an intersubunit bridge (bridge B4) with the 23S rRNA of the 50S subunit in the ribosome. The polypeptide is Small ribosomal subunit protein uS15 (Staphylococcus saprophyticus subsp. saprophyticus (strain ATCC 15305 / DSM 20229 / NCIMB 8711 / NCTC 7292 / S-41)).